Here is a 331-residue protein sequence, read N- to C-terminus: Thiamine thiazole synthase (331 aa).

Residues Ser-82, 103-104 (EA), Gly-111, and Val-176 each bind substrate. At Cys-210 the chain carries 2,3-didehydroalanine (Cys). Substrate contacts are provided by residues Asp-212, His-242, Met-296, and 306-308 (RMG).

This sequence belongs to the THI4 family. As to quaternary structure, homooctamer. Requires Fe cation as cofactor. In terms of processing, during the catalytic reaction, a sulfide is transferred from Cys-210 to a reaction intermediate, generating a dehydroalanine residue.

Its subcellular location is the cytoplasm. It localises to the nucleus. It catalyses the reaction [ADP-thiazole synthase]-L-cysteine + glycine + NAD(+) = [ADP-thiazole synthase]-dehydroalanine + ADP-5-ethyl-4-methylthiazole-2-carboxylate + nicotinamide + 3 H2O + 2 H(+). In terms of biological role, involved in biosynthesis of the thiamine precursor thiazole. Catalyzes the conversion of NAD and glycine to adenosine diphosphate 5-(2-hydroxyethyl)-4-methylthiazole-2-carboxylic acid (ADT), an adenylated thiazole intermediate. The reaction includes an iron-dependent sulfide transfer from a conserved cysteine residue of the protein to a thiazole intermediate. The enzyme can only undergo a single turnover, which suggests it is a suicide enzyme. May have additional roles in adaptation to various stress conditions and in DNA damage tolerance. The polypeptide is Thiamine thiazole synthase (Eremothecium gossypii (strain ATCC 10895 / CBS 109.51 / FGSC 9923 / NRRL Y-1056) (Yeast)).